We begin with the raw amino-acid sequence, 142 residues long: MKTQVAKKEEVTRDWYLVDVDNKVLGRVATEIANVLRGKNKPTFTPSVDTGDFVIVVNAEKIALTGRKLADKTYYSHSSYPGGLKEITAGKLLDKKPEELLKKAVKGMLPKNKLARHMLKKLKIYSGGAHPHAAQNPKNLNI.

The protein belongs to the universal ribosomal protein uL13 family. Part of the 50S ribosomal subunit.

Its function is as follows. This protein is one of the early assembly proteins of the 50S ribosomal subunit, although it is not seen to bind rRNA by itself. It is important during the early stages of 50S assembly. In Citrifermentans bemidjiense (strain ATCC BAA-1014 / DSM 16622 / JCM 12645 / Bem) (Geobacter bemidjiensis), this protein is Large ribosomal subunit protein uL13.